A 218-amino-acid polypeptide reads, in one-letter code: UPF0301 protein RPB_4502 (218 aa).

Residues M1–Q26 form a disordered region.

It belongs to the UPF0301 (AlgH) family.

In Rhodopseudomonas palustris (strain HaA2), this protein is UPF0301 protein RPB_4502.